We begin with the raw amino-acid sequence, 242 residues long: MNVADISQAPEAYRDVVWIADTCKLIMGIGWTANYVGMIRKSLKDQTYAMALLPLCCNFAWELTYAIMYAFTTSLEKYVHFSGLLLNCGVMYTAVKNAPREWEHAPLVQRNLRLIFVLAVAGFASAHVVLAKQVGPELGQAWSAYACQLLLSVGGLCQLLCRGHSRGASYFLWFSRFFGSLVLVPQDIIRYTYWKEAHEFMGSPMYIWFVTIFLILDGSYGLCLWYVRRFEQQNPAAGKLKK.

Transmembrane regions (helical) follow at residues 16 to 36, 51 to 71, 78 to 95, 114 to 134, 141 to 161, 169 to 189, and 207 to 227; these read VVWI…ANYV, ALLP…MYAF, YVHF…YTAV, LIFV…AKQV, AWSA…QLLC, SYFL…QDII, and IWFV…LWYV.

This sequence belongs to the paxB family.

The protein resides in the membrane. The protein operates within secondary metabolite biosynthesis; terpenoid biosynthesis. In terms of biological role, terpene cyclase; part of the gene cluster that mediates the biosynthesis of the diterpenoid pyrones higginsianins A and B. The first step of the pathway is the synthesis of the alpha-pyrone moiety by the polyketide synthase dpchA via condensation of one acetyl-CoA starter unit with 3 malonyl-CoA units and 2 methylations. The alpha-pyrone is then combined with geranylgeranyl pyrophosphate (GGPP) formed by the GGPP synthase dpchD through the action of the prenyltransferase dpchC to yield a linear alpha-pyrone diterpenoid. Subsequent steps in the diterpenoid pyrone biosynthetic pathway involve the decalin core formation, which is initiated by the epoxidation of the C10-C11 olefin by the FAD-dependent oxidoreductase dpchE, and is followed by a cyclization cascade catalyzed by the terpene cyclase dpchB. The short chain dehydrogenase/reductase dpchG then oxidizes the 8S hydroxy group to a ketone and the short chain dehydrogenase/reductase dpchH reduces the ketone to the 8R hydroxy group to yield higginsianin B. Finally, the FAD-dependent oxidoreductase dpchF converts higginsianin B into higginsianin A. In Colletotrichum higginsianum (strain IMI 349063) (Crucifer anthracnose fungus), this protein is Terpene cyclase dpchB.